The sequence spans 211 residues: Redox-sensing transcriptional repressor Rex (211 aa).

The segment at residues 17–56 is a DNA-binding region (H-T-H motif); sequence LYYRFVSILKGKGIDRVNSKTISEALQIDSATIRRDFSYF. An NAD(+)-binding site is contributed by 91–96; it reads GIGNLG.

It belongs to the transcriptional regulatory Rex family. In terms of assembly, homodimer.

Its subcellular location is the cytoplasm. Functionally, modulates transcription in response to changes in cellular NADH/NAD(+) redox state. This Staphylococcus epidermidis (strain ATCC 35984 / DSM 28319 / BCRC 17069 / CCUG 31568 / BM 3577 / RP62A) protein is Redox-sensing transcriptional repressor Rex.